An 80-amino-acid polypeptide reads, in one-letter code: Large ribosomal subunit protein bL31 (80 aa).

Residues C16, C18, C38, and C41 each coordinate Zn(2+).

Belongs to the bacterial ribosomal protein bL31 family. Type A subfamily. In terms of assembly, part of the 50S ribosomal subunit. The cofactor is Zn(2+).

In terms of biological role, binds the 23S rRNA. The chain is Large ribosomal subunit protein bL31 from Mycobacterium bovis (strain ATCC BAA-935 / AF2122/97).